A 249-amino-acid chain; its full sequence is Probable septum site-determining protein MinC (249 aa).

A disordered region spans residues 89–130 (SLFEPGMPPAMKGGRPAPDFEVPEVDPADPPKAGKGKAAAPI). Positions 119-129 (PKAGKGKAAAP) are enriched in low complexity.

It belongs to the MinC family. As to quaternary structure, interacts with MinD and FtsZ.

In terms of biological role, cell division inhibitor that blocks the formation of polar Z ring septums. Rapidly oscillates between the poles of the cell to destabilize FtsZ filaments that have formed before they mature into polar Z rings. Prevents FtsZ polymerization. The sequence is that of Probable septum site-determining protein MinC from Rhizobium meliloti (strain 1021) (Ensifer meliloti).